The chain runs to 118 residues: MITKPDKNKIRQKRHRRVRGKLSGTADRPRLNVFRSNTGIYAQVIDDVAGVTLASASTLDKEVSKGTKTEQAVVVGKLVAERAVAKGISEVVFDRGGYLYHGRVKALADAARENGLKF.

A disordered region spans residues 1–24 (MITKPDKNKIRQKRHRRVRGKLSG). A compositionally biased stretch (basic residues) spans 10 to 20 (IRQKRHRRVRG).

The protein belongs to the universal ribosomal protein uL18 family. As to quaternary structure, part of the 50S ribosomal subunit; part of the 5S rRNA/L5/L18/L25 subcomplex. Contacts the 5S and 23S rRNAs.

This is one of the proteins that bind and probably mediate the attachment of the 5S RNA into the large ribosomal subunit, where it forms part of the central protuberance. The chain is Large ribosomal subunit protein uL18 from Streptococcus sanguinis (strain SK36).